A 302-amino-acid chain; its full sequence is Nitrophorin Cim l NP (302 aa).

Residues 1–20 (MKLLLSAGAALAFVLGLCAA) form the signal peptide. C80 contacts heme.

It depends on heme b as a cofactor. Post-translationally, the N-terminus is blocked. Expressed in salivary glands.

The protein resides in the secreted. Its function is as follows. Heme-based protein that delivers nitric oxide gas (NO) to the victim while feeding, resulting in vasodilation. In place of heme, the heme-binding cysteine can also reversibly bind NO when it is present in high concentrations. The chain is Nitrophorin Cim l NP from Cimex lectularius (Bed bug).